Here is a 141-residue protein sequence, read N- to C-terminus: Hemoglobin subunit mu (141 aa).

The Globin domain maps to 1–141; that stretch reads MLSAQERAQI…VAVVLTEKYR (141 aa). Positions 58 and 87 each coordinate heme b.

It belongs to the globin family. Expressed in erythroid tissues.

In Homo sapiens (Human), this protein is Hemoglobin subunit mu (HBM).